The sequence spans 191 residues: Small ribosomal subunit protein eS7 (191 aa).

The protein belongs to the eukaryotic ribosomal protein eS7 family.

The polypeptide is Small ribosomal subunit protein eS7 (RPS7) (Hordeum vulgare (Barley)).